A 232-amino-acid polypeptide reads, in one-letter code: Dephospho-CoA kinase (232 aa).

One can recognise a DPCK domain in the interval 3–206 (IVGLTGGIAS…RPLTWIEFWR (204 aa)). 8 to 15 (GGIASGKS) lines the ATP pocket.

The protein belongs to the CoaE family.

Its subcellular location is the peroxisome. It catalyses the reaction 3'-dephospho-CoA + ATP = ADP + CoA + H(+). The protein operates within cofactor biosynthesis; coenzyme A biosynthesis; CoA from (R)-pantothenate: step 5/5. Catalyzes the phosphorylation of the 3'-hydroxyl group of dephosphocoenzyme A to form coenzyme A. This chain is Dephospho-CoA kinase, found in Arabidopsis thaliana (Mouse-ear cress).